An 874-amino-acid polypeptide reads, in one-letter code: Alanine--tRNA ligase (874 aa).

Zn(2+)-binding residues include His562, His566, Cys664, and His668.

This sequence belongs to the class-II aminoacyl-tRNA synthetase family. Zn(2+) serves as cofactor.

The protein localises to the cytoplasm. The enzyme catalyses tRNA(Ala) + L-alanine + ATP = L-alanyl-tRNA(Ala) + AMP + diphosphate. Functionally, catalyzes the attachment of alanine to tRNA(Ala) in a two-step reaction: alanine is first activated by ATP to form Ala-AMP and then transferred to the acceptor end of tRNA(Ala). Also edits incorrectly charged Ser-tRNA(Ala) and Gly-tRNA(Ala) via its editing domain. This is Alanine--tRNA ligase from Neisseria meningitidis serogroup C / serotype 2a (strain ATCC 700532 / DSM 15464 / FAM18).